A 1111-amino-acid polypeptide reads, in one-letter code: Serine/threonine-protein kinase Nek10 (1111 aa).

The span at 1–16 shows a compositional bias: basic and acidic residues; sequence MPDQDTKAKSTEKTAD. Disordered regions lie at residues 1–24 and 47–72; these read MPDQ…TTTR and AINF…HRAR. The segment covering 47–63 has biased composition (polar residues); that stretch reads AINFDSAQNNMTKSEPT. A coiled-coil region spans residues 481–514; sequence YKDLVSQLNLLLEDELKQIAENIESINQKKAPLK. Residues 519-791 enclose the Protein kinase domain; that stretch reads YAVLDHLGSG…MISDVMMKYL (273 aa). Residues 525-533 and K548 each bind ATP; that span reads LGSGAFGCV. D655 acts as the Proton acceptor in catalysis.

This sequence belongs to the protein kinase superfamily. NEK Ser/Thr protein kinase family. NIMA subfamily. Interacts with RAF1 and MAP2K1; the interaction is direct with RAF1 and required for ERK1/2-signaling pathway activation in response to UV irradiation. Requires Mg(2+) as cofactor. As to expression, expressed in the mammary gland, lung, spleen, and kidney.

The catalysed reaction is L-seryl-[protein] + ATP = O-phospho-L-seryl-[protein] + ADP + H(+). It carries out the reaction L-threonyl-[protein] + ATP = O-phospho-L-threonyl-[protein] + ADP + H(+). In terms of biological role, plays a role in the cellular response to UV irradiation. Mediates G2/M cell cycle arrest, MEK autoactivation and ERK1/2-signaling pathway activation in response to UV irradiation. In ciliated cells, it is involved in the regulation of mucociliary transport. This Mus musculus (Mouse) protein is Serine/threonine-protein kinase Nek10.